Consider the following 261-residue polypeptide: tRNA pseudouridine synthase A (261 aa).

Asp51 acts as the Nucleophile in catalysis. Position 109 (Tyr109) interacts with substrate.

The protein belongs to the tRNA pseudouridine synthase TruA family. In terms of assembly, homodimer.

The enzyme catalyses uridine(38/39/40) in tRNA = pseudouridine(38/39/40) in tRNA. Its function is as follows. Formation of pseudouridine at positions 38, 39 and 40 in the anticodon stem and loop of transfer RNAs. In Shewanella amazonensis (strain ATCC BAA-1098 / SB2B), this protein is tRNA pseudouridine synthase A.